Reading from the N-terminus, the 432-residue chain is Adenylosuccinate synthetase (432 aa).

Residues 13 to 19 and 41 to 43 each bind GTP; these read GDEGKGK and GHT. Asp14 acts as the Proton acceptor in catalysis. Mg(2+) is bound by residues Asp14 and Gly41. Residues 14-17, 39-42, Thr130, Arg144, Gln225, Thr240, and Arg304 contribute to the IMP site; these read DEGK and NAGH. His42 (proton donor) is an active-site residue. 300-306 serves as a coordination point for substrate; sequence ATTGRRR. GTP contacts are provided by residues Arg306, 332–334, and 415–417; these read KLD and STG.

It belongs to the adenylosuccinate synthetase family. Homodimer. It depends on Mg(2+) as a cofactor.

It is found in the cytoplasm. The catalysed reaction is IMP + L-aspartate + GTP = N(6)-(1,2-dicarboxyethyl)-AMP + GDP + phosphate + 2 H(+). The protein operates within purine metabolism; AMP biosynthesis via de novo pathway; AMP from IMP: step 1/2. In terms of biological role, plays an important role in the de novo pathway of purine nucleotide biosynthesis. Catalyzes the first committed step in the biosynthesis of AMP from IMP. In Salmonella paratyphi C (strain RKS4594), this protein is Adenylosuccinate synthetase.